The primary structure comprises 314 residues: Ribosomal protein L11 methyltransferase (314 aa).

4 residues coordinate S-adenosyl-L-methionine: Thr-161, Gly-182, Asp-204, and Asn-248.

The protein belongs to the methyltransferase superfamily. PrmA family.

It localises to the cytoplasm. The catalysed reaction is L-lysyl-[protein] + 3 S-adenosyl-L-methionine = N(6),N(6),N(6)-trimethyl-L-lysyl-[protein] + 3 S-adenosyl-L-homocysteine + 3 H(+). Its function is as follows. Methylates ribosomal protein L11. The chain is Ribosomal protein L11 methyltransferase from Listeria monocytogenes serotype 4a (strain HCC23).